The following is a 1118-amino-acid chain: Constitutive coactivator of PPAR-gamma-like protein 1 (1118 aa).

The segment at 339 to 405 is interaction with YES1, SRC and FYN; sequence PPHYLAARPG…SLSEPAPLTL (67 aa). The disordered stretch occupies residues 374–533; sequence AKPVAPQVPS…GTVQPIPCLL (160 aa). Positions 376 to 396 are enriched in low complexity; the sequence is PVAPQVPSPGGAPGQGPYPYS. 2 stretches are compositionally biased toward polar residues: residues 405-420 and 435-447; these read LDTS…SYSN and SPIN…SPNH. Residues 481-502 are compositionally biased toward basic and acidic residues; sequence GWEKTGSHSEPQARGDPGDQTK. A compositionally biased stretch (polar residues) spans 503–514; it reads AEGSSTASSGSQ. T655 bears the Phosphothreonine mark. The interval 829-1118 is RNA binding; it reads ADQAAKVEKM…LEAAVLNKEE (290 aa). Omega-N-methylarginine occurs at positions 873, 884, and 886. A disordered region spans residues 921–945; that stretch reads AFSGSDSSRTSKSQGGVQPIPSQGG. The span at 924 to 936 shows a compositional bias: polar residues; that stretch reads GSDSSRTSKSQGG. An N6-acetyllysine modification is found at K932. S960 bears the Phosphoserine mark. Residues R982 and R986 each carry the omega-N-methylarginine modification. Residue S1023 is modified to Phosphoserine. The interval 1025 to 1102 is disordered; that stretch reads EEVAKELKSK…HLNALSTDSA (78 aa). Over residues 1026-1037 the composition is skewed to basic and acidic residues; it reads EVAKELKSKSGE. The span at 1038-1051 shows a compositional bias: low complexity; sequence SKSSAMSSDGSLAE. A phosphoserine mark is found at S1044, S1045, and S1048. Over residues 1076 to 1101 the composition is skewed to polar residues; that stretch reads HSESALNNDSKTCNTNPHLNALSTDS.

Belongs to the constitutive coactivator of PPAR-gamma family. As to quaternary structure, interacts with PURA. Interacts with SRC family protein kinases YES1, SRC and FYN. Upon tyrosine phosphorylation, interacts with PIK3R1. Interacts with IGF2BP1/IMP-1 in an RNA-dependent manner. Post-translationally, arg-982 is dimethylated, probably to asymmetric dimethylarginine. Phosphorylated on tyrosine by SRC family protein kinases upon oxidative stress, for instance following UV irradiation. Widely expressed. In gastric mucosa, detected in the bottom region of the foveolar epithelium (at protein level).

The protein resides in the cytoplasm. It is found in the cell membrane. Component of the oxidative stress-induced survival signaling. May regulate the activation of SRC family protein kinases. May act as a scaffolding protein enabling SRC family protein kinases to phosphorylate and activate PI3-kinase. Binds IGF2 RNA and promotes the production of IGF2 protein. This Homo sapiens (Human) protein is Constitutive coactivator of PPAR-gamma-like protein 1 (FAM120A).